The chain runs to 388 residues: 4-hydroxy-3-methylbut-2-en-1-yl diphosphate synthase (flavodoxin) (388 aa).

Positions 281, 284, 316, and 323 each coordinate [4Fe-4S] cluster.

Belongs to the IspG family. It depends on [4Fe-4S] cluster as a cofactor.

It carries out the reaction (2E)-4-hydroxy-3-methylbut-2-enyl diphosphate + oxidized [flavodoxin] + H2O + 2 H(+) = 2-C-methyl-D-erythritol 2,4-cyclic diphosphate + reduced [flavodoxin]. The protein operates within isoprenoid biosynthesis; isopentenyl diphosphate biosynthesis via DXP pathway; isopentenyl diphosphate from 1-deoxy-D-xylulose 5-phosphate: step 5/6. Its function is as follows. Converts 2C-methyl-D-erythritol 2,4-cyclodiphosphate (ME-2,4cPP) into 1-hydroxy-2-methyl-2-(E)-butenyl 4-diphosphate. This is 4-hydroxy-3-methylbut-2-en-1-yl diphosphate synthase (flavodoxin) from Paenarthrobacter aurescens (strain TC1).